A 142-amino-acid chain; its full sequence is Transcription antitermination protein NusB (142 aa).

Belongs to the NusB family.

Its function is as follows. Involved in transcription antitermination. Required for transcription of ribosomal RNA (rRNA) genes. Binds specifically to the boxA antiterminator sequence of the ribosomal RNA (rrn) operons. This chain is Transcription antitermination protein NusB, found in Persephonella marina (strain DSM 14350 / EX-H1).